Reading from the N-terminus, the 293-residue chain is 4-diphosphocytidyl-2-C-methyl-D-erythritol kinase (293 aa).

Lys-23 is an active-site residue. Pro-109 to Ala-119 is an ATP binding site. Asp-151 is an active-site residue.

Belongs to the GHMP kinase family. IspE subfamily.

It carries out the reaction 4-CDP-2-C-methyl-D-erythritol + ATP = 4-CDP-2-C-methyl-D-erythritol 2-phosphate + ADP + H(+). Its pathway is isoprenoid biosynthesis; isopentenyl diphosphate biosynthesis via DXP pathway; isopentenyl diphosphate from 1-deoxy-D-xylulose 5-phosphate: step 3/6. Catalyzes the phosphorylation of the position 2 hydroxy group of 4-diphosphocytidyl-2C-methyl-D-erythritol. The chain is 4-diphosphocytidyl-2-C-methyl-D-erythritol kinase from Rhizorhabdus wittichii (strain DSM 6014 / CCUG 31198 / JCM 15750 / NBRC 105917 / EY 4224 / RW1) (Sphingomonas wittichii).